The primary structure comprises 313 residues: Probable 5-dehydro-4-deoxyglucarate dehydratase 1 (313 aa).

It belongs to the DapA family.

The catalysed reaction is 5-dehydro-4-deoxy-D-glucarate + H(+) = 2,5-dioxopentanoate + CO2 + H2O. Its pathway is carbohydrate acid metabolism; D-glucarate degradation; 2,5-dioxopentanoate from D-glucarate: step 2/2. The protein is Probable 5-dehydro-4-deoxyglucarate dehydratase 1 of Streptomyces avermitilis (strain ATCC 31267 / DSM 46492 / JCM 5070 / NBRC 14893 / NCIMB 12804 / NRRL 8165 / MA-4680).